Reading from the N-terminus, the 229-residue chain is PKHD-type hydroxylase BRADO4652 (229 aa).

A Fe2OG dioxygenase domain is found at Gln78 to Ser180. 3 residues coordinate Fe cation: His98, Asp100, and His161. Arg171 lines the 2-oxoglutarate pocket.

Fe(2+) is required as a cofactor. The cofactor is L-ascorbate.

In Bradyrhizobium sp. (strain ORS 278), this protein is PKHD-type hydroxylase BRADO4652.